Consider the following 372-residue polypeptide: Lectin/endochitinase 1 (372 aa).

The first 23 residues, 1-23, serve as a signal peptide directing secretion; it reads MMMRFLSAVVIMSSAMAVGLVSA. Q24 provides a ligand contact to substrate. Position 24 is a pyrrolidone carboxylic acid (Q24). Chitin-binding type-1 domains are found at residues 24 to 64 and 69 to 111; these read QRCG…KCWS and DHRC…RCSS. Intrachain disulfides connect C26–C41, C35–C47, C40–C54, and C58–C62. 42–53 contacts substrate; that stretch reads SIWGWCGDSEPY. H70 contacts Zn(2+). 4 cysteine pairs are disulfide-bonded: C72-C87, C81-C93, C86-C100, and C105-C109. H90 provides a ligand contact to Zn(2+). Positions 113 to 128 are spacer; that stretch reads VRGPRVALSGNSTANS. N-linked (GlcNAc...) asparagine glycosylation is present at N123. Positions 129–372 are chitinase; the sequence is IGNVVVTEPL…FQRIQMRVAA (244 aa).

In terms of assembly, monomer and homodimer. Zinc favors dimerization. Active in the monomeric form but probably inactive in the dimeric form. The interaction with glycans on the mammalian TCR and MHC molecules of the T-cell and antigen-presenting cell, respectively, is inhibited by oligomers of GlcNAc. Proteolytically processed to yield a very small protein (8.5 kDa, 86 AA) containing only the two chitin-binding domains. In terms of tissue distribution, rhizomes and inflorescence with immature seeds.

It catalyses the reaction Random endo-hydrolysis of N-acetyl-beta-D-glucosaminide (1-&gt;4)-beta-linkages in chitin and chitodextrins.. Functions both as a chitinase and as a N-acetyl-D-glucosamine binding lectin. Inhibits the growth of several phytopathogenic chitin-containing fungi. Also possesses insecticidal activity and superantigenic properties. In Urtica dioica (Great nettle), this protein is Lectin/endochitinase 1 (UDA1).